The following is a 179-amino-acid chain: Large ribosomal subunit protein uL6 (179 aa).

The protein belongs to the universal ribosomal protein uL6 family. In terms of assembly, part of the 50S ribosomal subunit.

Functionally, this protein binds to the 23S rRNA, and is important in its secondary structure. It is located near the subunit interface in the base of the L7/L12 stalk, and near the tRNA binding site of the peptidyltransferase center. This chain is Large ribosomal subunit protein uL6, found in Rippkaea orientalis (strain PCC 8801 / RF-1) (Cyanothece sp. (strain PCC 8801)).